The sequence spans 285 residues: Small ribosomal subunit protein uS5x (285 aa).

A compositionally biased stretch (basic and acidic residues) spans 1–19 (MAERGGERGVERGGERGDF). Residues 1–51 (MAERGGERGVERGGERGDFGRGFGGRGGRGDRGGRGRGGRGGRRGGRASEE) form a disordered region. Residues 35–46 (RGRGGRGGRRGG) show a composition bias toward basic residues. In terms of domain architecture, S5 DRBM spans 96-159 (LKDEVMKIMP…ILAKLSVVPV (64 aa)).

Belongs to the universal ribosomal protein uS5 family. As to quaternary structure, interacts with MBD6.

In terms of biological role, component of the ribosome, a large ribonucleoprotein complex responsible for the synthesis of proteins in the cell. The small ribosomal subunit (SSU) binds messenger RNAs (mRNAs) and translates the encoded message by selecting cognate aminoacyl-transfer RNA (tRNA) molecules. The large subunit (LSU) contains the ribosomal catalytic site termed the peptidyl transferase center (PTC), which catalyzes the formation of peptide bonds, thereby polymerizing the amino acids delivered by tRNAs into a polypeptide chain. The nascent polypeptides leave the ribosome through a tunnel in the LSU and interact with protein factors that function in enzymatic processing, targeting, and the membrane insertion of nascent chains at the exit of the ribosomal tunnel. Plays a role in the assembly and function of the 40S ribosomal subunit. Mutations in this protein affects the control of translational fidelity. Involved in nucleolar processing of pre-18S ribosomal RNA and ribosome assembly. Also involved in RNA-directed DNA methylation (RdDM). The polypeptide is Small ribosomal subunit protein uS5x (Arabidopsis thaliana (Mouse-ear cress)).